The chain runs to 343 residues: Heat-inducible transcription repressor HrcA (343 aa).

This sequence belongs to the HrcA family.

Negative regulator of class I heat shock genes (grpE-dnaK-dnaJ and groELS operons). Prevents heat-shock induction of these operons. In Phytoplasma mali (strain AT), this protein is Heat-inducible transcription repressor HrcA.